Here is a 379-residue protein sequence, read N- to C-terminus: Cobalt-precorrin-5B C(1)-methyltransferase (379 aa).

Belongs to the CbiD family.

It carries out the reaction Co-precorrin-5B + S-adenosyl-L-methionine = Co-precorrin-6A + S-adenosyl-L-homocysteine. It participates in cofactor biosynthesis; adenosylcobalamin biosynthesis; cob(II)yrinate a,c-diamide from sirohydrochlorin (anaerobic route): step 6/10. Catalyzes the methylation of C-1 in cobalt-precorrin-5B to form cobalt-precorrin-6A. The protein is Cobalt-precorrin-5B C(1)-methyltransferase of Citrobacter koseri (strain ATCC BAA-895 / CDC 4225-83 / SGSC4696).